A 640-amino-acid chain; its full sequence is F-box protein MET30 (640 aa).

Positions 1 to 19 are enriched in basic and acidic residues; that stretch reads MRRERQRMMSFEDKDKDDL. Residues 1-84 form a disordered region; sequence MRRERQRMMS…ATNDSGTRVQ (84 aa). Residues 1–299 are necessary to mediate nuclear localization; it reads MRRERQRMMS…KGHCRIQEFK (299 aa). Polar residues-rich tracts occupy residues 45–56 and 64–82; these read TGSSDDLAQGSS and ATRS…SGTR. Ser67 carries the post-translational modification Phosphoserine. The tract at residues 180–225 is interaction with SKP1/CBF3D; the sequence is KIDFISILPQELSLKILSYLDCQSLCNATRVCRKWQKLADDDRVWY. An important for mediating homomultimerization region spans residues 180 to 277; sequence KIDFISILPQ…TQTTRPWKVI (98 aa). An F-box domain is found at 181-227; the sequence is IDFISILPQELSLKILSYLDCQSLCNATRVCRKWQKLADDDRVWYHM. The interval 277-640 is interaction with MET4; that stretch reads IYRERFKVES…VKMYKFDLND (364 aa). 8 WD repeats span residues 300–328, 340–368, 380–408, 419–449, 461–499, 509–538, 550–578, and 607–635; these read GHMD…GIWD, GHSD…RVWN, GHSD…KVWH, GHTE…RMWD, GHVG…TMTD, NEQE…KLWD, GHVE…KVWD, and DKVA…KMYK. Residues 481 to 495 show a composition bias toward polar residues; the sequence is ATDNTSDGSSPQDDP. The disordered stretch occupies residues 481-516; that stretch reads ATDNTSDGSSPQDDPTMTDGADESDTPSNEQETVLD.

Belongs to the WD repeat MET30/SCONB/SCON-2 family. Homomultimer. Interacts with CDC53 and SKP1/CBF3D to form the E3 ubiquitin ligase complex SCF(Met30). Interacts with MET4.

The protein localises to the cytoplasm. It localises to the nucleus. Its pathway is protein modification; protein ubiquitination. Functionally, substrate-recognition component of the SCF(Met30) complex, an E3 ubiquitin ligase complex that mediates the ubiquitination and subsequent proteasomal degradation of target proteins. Negatively regulates sulfur amino acids biosynthesis genes expression. Controls cell cycle function (being required for the G1/S transition and M-phase but not the S-phase), sulfur metabolism, and methionine biosynthesis as part of the SCF(Met30) complex. Required for the efficient binding of CDC45 and MCM proteins to origins of replication. Required for efficient expression of G1 cyclins. The SCF(Met30) complex catalyzes ubiquitination and degradation of the Cdk-inhibitory kinase SWE1. Involved in the S-adenosylmethionine (AdoMet)-mediated inhibition of the transcription function of MET4. The SCF(Met30) complex mediates ubiquitination and subsequent degradation of MET4 and the cellular response to cadmium. The SCF(Met30) complex acts as an inhibitor of autophagy by promoting ubiquitination and degradation of ATG9 in normal conditions. The protein is F-box protein MET30 of Saccharomyces cerevisiae (strain ATCC 204508 / S288c) (Baker's yeast).